Consider the following 549-residue polypeptide: Speedy protein E3 (549 aa).

Low complexity predominate over residues 1–15 (MTSHQPQPQEEQSPQ). 5 disordered regions span residues 1–74 (MTSH…EPEE), 126–145 (KREC…APEP), 188–218 (SPPR…APEP), 261–291 (SPPR…APEP), and 334–364 (SPPR…APEP). Composition is skewed to acidic residues over residues 58–74 (DESD…EPEE), 131–145 (DESD…APEP), 204–218 (DESD…APEP), 277–291 (DESD…APEP), and 350–364 (DESD…APEP).

This sequence belongs to the Speedy/Ringo family. As to expression, predominantly expressed in testis and spleen.

This is Speedy protein E3 from Homo sapiens (Human).